We begin with the raw amino-acid sequence, 941 residues long: Cell wall protein IFF9 (941 aa).

Positions 1–20 are cleaved as a signal peptide; sequence MQLFQNILVSIALLTQIVFA. Asn917 carries the GPI-anchor amidated asparagine lipid modification. The propeptide at 918-941 is removed in mature form; that stretch reads GSNKESIENIKYLALVVFGLMMFM.

It belongs to the HYR1/IFF family. The GPI-anchor is attached to the protein in the endoplasmic reticulum and serves to target the protein to the cell surface. There, the glucosamine-inositol phospholipid moiety is cleaved off and the GPI-modified mannoprotein is covalently attached via its lipidless GPI glycan remnant to the 1,6-beta-glucan of the outer cell wall layer.

The protein resides in the secreted. The protein localises to the cell wall. Its subcellular location is the membrane. In terms of biological role, GPI-anchored cell wall protein involved in cell wall organization, hyphal growth, as well as in host-fungal interaction and virulence. The sequence is that of Cell wall protein IFF9 (IFF9) from Candida albicans (strain SC5314 / ATCC MYA-2876) (Yeast).